We begin with the raw amino-acid sequence, 382 residues long: Porin-like protein BU359 (382 aa).

Positions 1 to 23 (MTNRKSLAMVIPMLLAASNGVNA) are cleaved as a signal peptide.

This sequence belongs to the Gram-negative porin family. As to quaternary structure, homotrimer.

The protein localises to the cell outer membrane. Functionally, forms pores that allow passive diffusion of small molecules across the membrane. In Buchnera aphidicola subsp. Acyrthosiphon pisum (strain APS) (Acyrthosiphon pisum symbiotic bacterium), this protein is Porin-like protein BU359.